The sequence spans 369 residues: Phospho-N-acetylmuramoyl-pentapeptide-transferase (369 aa).

Helical transmembrane passes span 2–22 (IAIL…TPFF), 54–74 (GLVI…FLGL), 80–100 (GLLV…DDIL), 113–133 (FYKV…TFLV), 158–178 (ALFS…LLWI), 195–215 (LDGL…VIGF), 241–261 (PLDM…FLWW), 268–288 (IMMG…LSIL), 293–313 (LLFL…ILQI), and 347–367 (FWII…ADWL).

It belongs to the glycosyltransferase 4 family. MraY subfamily. It depends on Mg(2+) as a cofactor.

The protein localises to the cell membrane. It catalyses the reaction UDP-N-acetyl-alpha-D-muramoyl-L-alanyl-gamma-D-glutamyl-meso-2,6-diaminopimeloyl-D-alanyl-D-alanine + di-trans,octa-cis-undecaprenyl phosphate = di-trans,octa-cis-undecaprenyl diphospho-N-acetyl-alpha-D-muramoyl-L-alanyl-D-glutamyl-meso-2,6-diaminopimeloyl-D-alanyl-D-alanine + UMP. The protein operates within cell wall biogenesis; peptidoglycan biosynthesis. Its function is as follows. Catalyzes the initial step of the lipid cycle reactions in the biosynthesis of the cell wall peptidoglycan: transfers peptidoglycan precursor phospho-MurNAc-pentapeptide from UDP-MurNAc-pentapeptide onto the lipid carrier undecaprenyl phosphate, yielding undecaprenyl-pyrophosphoryl-MurNAc-pentapeptide, known as lipid I. The sequence is that of Phospho-N-acetylmuramoyl-pentapeptide-transferase from Tropheryma whipplei (strain TW08/27) (Whipple's bacillus).